A 118-amino-acid polypeptide reads, in one-letter code: DNA-binding protein YG5714_1868 (118 aa).

It belongs to the PDCD5 family.

The polypeptide is DNA-binding protein YG5714_1868 (Saccharolobus islandicus (strain Y.G.57.14 / Yellowstone #1) (Sulfolobus islandicus)).